The sequence spans 289 residues: Ribosomal protein L11 methyltransferase (289 aa).

4 residues coordinate S-adenosyl-L-methionine: T134, G155, D177, and N225.

It belongs to the methyltransferase superfamily. PrmA family.

It is found in the cytoplasm. The catalysed reaction is L-lysyl-[protein] + 3 S-adenosyl-L-methionine = N(6),N(6),N(6)-trimethyl-L-lysyl-[protein] + 3 S-adenosyl-L-homocysteine + 3 H(+). Its function is as follows. Methylates ribosomal protein L11. The chain is Ribosomal protein L11 methyltransferase from Parasynechococcus marenigrum (strain WH8102).